We begin with the raw amino-acid sequence, 112 residues long: Putative pterin-4-alpha-carbinolamine dehydratase (112 aa).

It belongs to the pterin-4-alpha-carbinolamine dehydratase family.

The enzyme catalyses (4aS,6R)-4a-hydroxy-L-erythro-5,6,7,8-tetrahydrobiopterin = (6R)-L-erythro-6,7-dihydrobiopterin + H2O. This chain is Putative pterin-4-alpha-carbinolamine dehydratase, found in Shewanella halifaxensis (strain HAW-EB4).